The chain runs to 341 residues: D-erythrose-4-phosphate dehydrogenase (341 aa).

12–13 (RI) is an NAD(+) binding site. Substrate-binding positions include 154-156 (SCT), R200, 213-214 (TK), and R236. Catalysis depends on C155, which acts as the Nucleophile. N318 contacts NAD(+).

The protein belongs to the glyceraldehyde-3-phosphate dehydrogenase family. Epd subfamily. As to quaternary structure, homotetramer.

The protein localises to the cytoplasm. The enzyme catalyses D-erythrose 4-phosphate + NAD(+) + H2O = 4-phospho-D-erythronate + NADH + 2 H(+). The protein operates within cofactor biosynthesis; pyridoxine 5'-phosphate biosynthesis; pyridoxine 5'-phosphate from D-erythrose 4-phosphate: step 1/5. Functionally, catalyzes the NAD-dependent conversion of D-erythrose 4-phosphate to 4-phosphoerythronate. In Edwardsiella ictaluri (strain 93-146), this protein is D-erythrose-4-phosphate dehydrogenase.